The chain runs to 125 residues: Fluoride-specific ion channel FluC (125 aa).

Transmembrane regions (helical) follow at residues 4–24, 36–56, 68–88, and 100–120; these read PLLA…LLAV, GTLL…AWFA, LITT…LEVV, and VISV…GFWL. Na(+) is bound by residues G75 and T78.

It belongs to the fluoride channel Fluc/FEX (TC 1.A.43) family.

The protein localises to the cell inner membrane. It carries out the reaction fluoride(in) = fluoride(out). Na(+) is not transported, but it plays an essential structural role and its presence is essential for fluoride channel function. Fluoride-specific ion channel. Important for reducing fluoride concentration in the cell, thus reducing its toxicity. The chain is Fluoride-specific ion channel FluC from Erwinia tasmaniensis (strain DSM 17950 / CFBP 7177 / CIP 109463 / NCPPB 4357 / Et1/99).